The chain runs to 339 residues: MENILHATPAHVSLPESFVFASDKVPPATKAVVSLPIIDLSCGRDEVRRSILEAGKELGFFQVVNHGVSKQVMRDMEGMCEQFFHLPAADKASLYSEERHKPNRLFSGATYDTGGEKYWRDCLRLACPFPVDDSINEWPDTPKGLRDVIEKFTSQTRDVGKELLRLLCEGMGIQADYFEGDLSGGNVILNINHYPSCPNPDKALGQPPHCDRNLITLLLPGAVNGLEVSYKGDWIKVDPAPNAFVVNFGQQLEVVTNGLLKSIEHRAMTNSALARTSVATFIMPTQECLIGPAKEFLSKENPPCYRTTMFRDFMRIYNVVKLGSSLNLTTNLKNVQKEI.

The region spanning 184–284 (GGNVILNINH…RTSVATFIMP (101 aa)) is the Fe2OG dioxygenase domain. His-209, Asp-211, and His-265 together coordinate Fe cation. A 2-oxoglutarate-binding site is contributed by Arg-275.

It belongs to the iron/ascorbate-dependent oxidoreductase family. It depends on Fe(2+) as a cofactor. L-ascorbate is required as a cofactor. Post-translationally, the N-terminus is blocked.

The protein resides in the cytoplasm. The enzyme catalyses 2'-deoxymugineate + 2-oxoglutarate + O2 = mugineate + succinate + CO2. Involved in the biosynthesis of mugineic acid family of phytosiderophores. Hydroxylates the C-2' positions of 2'-deoxymugineic acid (DMA) and 3-epihydroxymugineic acid (epiHDMA). May be involved in boron tolerance. The polypeptide is 2'-deoxymugineic-acid 2'-dioxygenase (Hordeum vulgare (Barley)).